The following is a 186-amino-acid chain: Acireductone dioxygenase (186 aa).

4 residues coordinate Fe(2+): His-103, His-105, Glu-109, and His-147. Residues His-103, His-105, Glu-109, and His-147 each contribute to the Ni(2+) site.

The protein belongs to the acireductone dioxygenase (ARD) family. In terms of assembly, monomer. The cofactor is Fe(2+). It depends on Ni(2+) as a cofactor.

It catalyses the reaction 1,2-dihydroxy-5-(methylsulfanyl)pent-1-en-3-one + O2 = 3-(methylsulfanyl)propanoate + CO + formate + 2 H(+). The catalysed reaction is 1,2-dihydroxy-5-(methylsulfanyl)pent-1-en-3-one + O2 = 4-methylsulfanyl-2-oxobutanoate + formate + 2 H(+). Its pathway is amino-acid biosynthesis; L-methionine biosynthesis via salvage pathway; L-methionine from S-methyl-5-thio-alpha-D-ribose 1-phosphate: step 5/6. Catalyzes 2 different reactions between oxygen and the acireductone 1,2-dihydroxy-3-keto-5-methylthiopentene (DHK-MTPene) depending upon the metal bound in the active site. Fe-containing acireductone dioxygenase (Fe-ARD) produces formate and 2-keto-4-methylthiobutyrate (KMTB), the alpha-ketoacid precursor of methionine in the methionine recycle pathway. Ni-containing acireductone dioxygenase (Ni-ARD) produces methylthiopropionate, carbon monoxide and formate, and does not lie on the methionine recycle pathway. In Synechococcus sp. (strain CC9605), this protein is Acireductone dioxygenase.